We begin with the raw amino-acid sequence, 449 residues long: Phosphoglucosamine mutase (449 aa).

Catalysis depends on Ser102, which acts as the Phosphoserine intermediate. The Mg(2+) site is built by Ser102, Asp241, Asp243, and Asp245. Residue Ser102 is modified to Phosphoserine.

Belongs to the phosphohexose mutase family. Mg(2+) is required as a cofactor. Activated by phosphorylation.

The enzyme catalyses alpha-D-glucosamine 1-phosphate = D-glucosamine 6-phosphate. Its function is as follows. Catalyzes the conversion of glucosamine-6-phosphate to glucosamine-1-phosphate. This chain is Phosphoglucosamine mutase, found in Roseobacter denitrificans (strain ATCC 33942 / OCh 114) (Erythrobacter sp. (strain OCh 114)).